Here is a 715-residue protein sequence, read N- to C-terminus: Protein Hook homolog 1 (715 aa).

The 117-residue stretch at 6 to 122 (TVLCESLIIW…RLLQLILGCA (117 aa)) folds into the Calponin-homology (CH) domain. Coiled-coil stretches lie at residues 167–434 (AGDT…DQLL) and 463–656 (IRLQ…EEKL).

This sequence belongs to the hook family. As to quaternary structure, interacts with microtubules.

Its subcellular location is the cytoplasm. The protein localises to the cytoskeleton. May function to promote vesicle trafficking and/or fusion. The protein is Protein Hook homolog 1 (hook1) of Danio rerio (Zebrafish).